Consider the following 244-residue polypeptide: 3-deoxy-manno-octulosonate cytidylyltransferase (244 aa).

Belongs to the KdsB family.

It localises to the cytoplasm. The catalysed reaction is 3-deoxy-alpha-D-manno-oct-2-ulosonate + CTP = CMP-3-deoxy-beta-D-manno-octulosonate + diphosphate. The protein operates within nucleotide-sugar biosynthesis; CMP-3-deoxy-D-manno-octulosonate biosynthesis; CMP-3-deoxy-D-manno-octulosonate from 3-deoxy-D-manno-octulosonate and CTP: step 1/1. It participates in bacterial outer membrane biogenesis; lipopolysaccharide biosynthesis. Its function is as follows. Activates KDO (a required 8-carbon sugar) for incorporation into bacterial lipopolysaccharide in Gram-negative bacteria. In Vesicomyosocius okutanii subsp. Calyptogena okutanii (strain HA), this protein is 3-deoxy-manno-octulosonate cytidylyltransferase.